Reading from the N-terminus, the 229-residue chain is ATP synthase subunit a (229 aa).

7 helical membrane-spanning segments follow: residues 24 to 44 (RLCFIVYFNCLMLIFDFLLFC), 45 to 65 (LFDLYLFVGLCLFLLLWFMLF), 83 to 103 (LLFCIVFLLYIAFLFLFCFLC), 117 to 137 (FMDVFFIRFLLCFLECFSLLC), 143 to 163 (FLRLFCNLLSSHFLLLMFFDF), 177 to 199 (CYFILFIFVFCFCLLFYVFLYLL), and 206 to 228 (LQLFIFCNMILQLIMDFLLFLLF).

It belongs to the ATPase A chain family. F-type ATPases have 2 components, CF(1) - the catalytic core - and CF(0) - the membrane proton channel. CF(1) has five subunits: alpha(3), beta(3), gamma(1), delta(1), epsilon(1). CF(0) has three main subunits: a, b and c.

The protein localises to the mitochondrion inner membrane. Its function is as follows. Mitochondrial membrane ATP synthase (F(1)F(0) ATP synthase or Complex V) produces ATP from ADP in the presence of a proton gradient across the membrane which is generated by electron transport complexes of the respiratory chain. F-type ATPases consist of two structural domains, F(1) - containing the extramembraneous catalytic core and F(0) - containing the membrane proton channel, linked together by a central stalk and a peripheral stalk. During catalysis, ATP synthesis in the catalytic domain of F(1) is coupled via a rotary mechanism of the central stalk subunits to proton translocation. Key component of the proton channel; it may play a direct role in the translocation of protons across the membrane. The sequence is that of ATP synthase subunit a (ATP6) from Trypanosoma brucei brucei.